The sequence spans 82 residues: RNA-binding protein Hfq (82 aa).

The Sm domain occupies 10-70 (DTFLNHVRKN…ISTIMPAQPV (61 aa)).

It belongs to the Hfq family. In terms of assembly, homohexamer.

In terms of biological role, RNA chaperone that binds small regulatory RNA (sRNAs) and mRNAs to facilitate mRNA translational regulation in response to envelope stress, environmental stress and changes in metabolite concentrations. Also binds with high specificity to tRNAs. The polypeptide is RNA-binding protein Hfq (Parvibaculum lavamentivorans (strain DS-1 / DSM 13023 / NCIMB 13966)).